Here is a 72-residue protein sequence, read N- to C-terminus: ADVPGNYPLNTNGNMYYCTILGENEFCRKVCKVHGVKYGYCFNSHCWCEYLEAKDVSVWNAAKNYCKNPVGK.

The region spanning 3–67 is the LCN-type CS-alpha/beta domain; that stretch reads VPGNYPLNTN…VWNAAKNYCK (65 aa). 3 cysteine pairs are disulfide-bonded: C18/C41, C27/C46, and C31/C48.

Belongs to the long (3 C-C) scorpion toxin superfamily. Sodium channel inhibitor family. Beta subfamily. As to expression, expressed by the venom gland.

The protein localises to the secreted. In terms of biological role, binds to sodium channels (Nav) and affects the channel activation process. This is Toxin Acra II-2 from Androctonus crassicauda (Arabian fat-tailed scorpion).